A 377-amino-acid polypeptide reads, in one-letter code: Flagellin D (377 aa).

Residues 104–128 (NSKADRVAIQEEVTALNDELNRIAE) are a coiled coil.

The protein belongs to the bacterial flagellin family. In terms of assembly, heteromer of multiple flagellin subunits including FlaA, FlaB, FlaC, FlaD and possibly FlaE.

The protein resides in the secreted. Its subcellular location is the bacterial flagellum. Functionally, flagellin is the subunit protein which polymerizes to form the filaments of bacterial flagella. FlaD is not essential for flagellar synthesis and motility. May have a role in virulence unrelated to motility. This Vibrio anguillarum (Listonella anguillarum) protein is Flagellin D (flaD).